The primary structure comprises 812 residues: Mitochondrial intermediate peptidase (812 aa).

Residues 1–35 constitute a mitochondrion transit peptide; it reads MLKLLRPRPWVCNSCLNRVAFPKPYPVGSRSTRWL. A disordered region spans residues 518-544; sequence STSEGGPAFGSPESAANDGMAASRGAS. Residue His587 coordinates Zn(2+). Glu588 is a catalytic residue. Residues His591 and His594 each contribute to the Zn(2+) site.

The protein belongs to the peptidase M3 family. It depends on Zn(2+) as a cofactor.

The protein localises to the mitochondrion matrix. It carries out the reaction Release of an N-terminal octapeptide as second stage of processing of some proteins imported into the mitochondrion.. Its function is as follows. Cleaves proteins, imported into the mitochondrion, to their mature size. While most mitochondrial precursor proteins are processed to the mature form in one step by mitochondrial processing peptidase (MPP), the sequential cleavage by MIP of an octapeptide after initial processing by MPP is a required step for a subgroup of nuclear-encoded precursor proteins destined for the matrix or the inner membrane. In Pyricularia oryzae (strain 70-15 / ATCC MYA-4617 / FGSC 8958) (Rice blast fungus), this protein is Mitochondrial intermediate peptidase (OCT1).